We begin with the raw amino-acid sequence, 176 residues long: Large ribosomal subunit protein uL10 (176 aa).

The protein belongs to the universal ribosomal protein uL10 family. Part of the ribosomal stalk of the 50S ribosomal subunit. The N-terminus interacts with L11 and the large rRNA to form the base of the stalk. The C-terminus forms an elongated spine to which L12 dimers bind in a sequential fashion forming a multimeric L10(L12)X complex.

In terms of biological role, forms part of the ribosomal stalk, playing a central role in the interaction of the ribosome with GTP-bound translation factors. This chain is Large ribosomal subunit protein uL10, found in Mycobacteroides abscessus (strain ATCC 19977 / DSM 44196 / CCUG 20993 / CIP 104536 / JCM 13569 / NCTC 13031 / TMC 1543 / L948) (Mycobacterium abscessus).